Here is a 415-residue protein sequence, read N- to C-terminus: Citrate (Re)-synthase (415 aa).

A Pyruvate carboxyltransferase domain is found at 4–275; the sequence is IFIIDVTNRD…GHEVDLSKAW (272 aa).

It belongs to the alpha-IPM synthase/homocitrate synthase family. The cofactor is Mn(2+).

It catalyses the reaction oxaloacetate + acetyl-CoA + H2O = citrate + CoA + H(+). Its activity is regulated as follows. Inhibited by citrate and under aerobic conditions. Functionally, catalyzes the condensation of the acetyl group of acetyl coenzyme A (acetyl-CoA) with oxaloacetate to form citrate. This enzyme is highly Re-face stereospecific with respect to the C-2 of oxaloacetate. The polypeptide is Citrate (Re)-synthase (Dehalococcoides mccartyi (strain CBDB1)).